The sequence spans 276 residues: Glutamate 5-kinase (276 aa).

K14 contacts ATP. S54, D141, and N157 together coordinate substrate. ATP contacts are provided by residues 177–178 (SD) and 219–225 (TGGMLTK).

It belongs to the glutamate 5-kinase family.

Its subcellular location is the cytoplasm. The enzyme catalyses L-glutamate + ATP = L-glutamyl 5-phosphate + ADP. It participates in amino-acid biosynthesis; L-proline biosynthesis; L-glutamate 5-semialdehyde from L-glutamate: step 1/2. Its function is as follows. Catalyzes the transfer of a phosphate group to glutamate to form L-glutamate 5-phosphate. The polypeptide is Glutamate 5-kinase (Listeria innocua serovar 6a (strain ATCC BAA-680 / CLIP 11262)).